The primary structure comprises 108 residues: UPF0145 protein YjfJ (108 aa).

It belongs to the UPF0145 family.

This is UPF0145 protein YjfJ (yjfJ) from Lactococcus lactis subsp. lactis (strain IL1403) (Streptococcus lactis).